The primary structure comprises 247 residues: tRNA pseudouridine synthase A 1 (247 aa).

Residue Asp53 is the Nucleophile of the active site. Tyr111 is a substrate binding site.

Belongs to the tRNA pseudouridine synthase TruA family. Homodimer.

It carries out the reaction uridine(38/39/40) in tRNA = pseudouridine(38/39/40) in tRNA. In terms of biological role, formation of pseudouridine at positions 38, 39 and 40 in the anticodon stem and loop of transfer RNAs. This is tRNA pseudouridine synthase A 1 from Bacillus cereus (strain ATCC 10987 / NRS 248).